Reading from the N-terminus, the 787-residue chain is Bifunctional dethiobiotin synthetase/adenosylmethionine-8-amino-7-oxononanoate aminotransferase (787 aa).

23-28 contacts ATP; it reads DVGKTI. Threonine 27 provides a ligand contact to Mg(2+). Residue threonine 54 participates in substrate binding. Mg(2+)-binding residues include aspartate 61 and glutamate 123. Residues 123 to 126 and 184 to 185 each bind ATP; these read ETAG and KD. Residue 323–324 coordinates (8S)-8-amino-7-oxononanoate; sequence WW. A pyridoxal 5'-phosphate-binding site is contributed by 384 to 385; that stretch reads GS. Tyrosine 421 lines the (8S)-8-amino-7-oxononanoate pocket. Aspartate 582 contributes to the pyridoxal 5'-phosphate binding site. Residues lysine 611 and glycine 645 each coordinate (8S)-8-amino-7-oxononanoate. 646–647 lines the pyridoxal 5'-phosphate pocket; the sequence is HS. Arginine 756 serves as a coordination point for (8S)-8-amino-7-oxononanoate.

The protein in the N-terminal section; belongs to the dethiobiotin synthetase family. In the C-terminal section; belongs to the class-III pyridoxal-phosphate-dependent aminotransferase family. BioA subfamily. Homodimer. The cofactor is Mg(2+). Requires pyridoxal 5'-phosphate as cofactor.

It localises to the mitochondrion matrix. It catalyses the reaction (7R,8S)-7,8-diammoniononanoate + CO2 + ATP = (4R,5S)-dethiobiotin + ADP + phosphate + 3 H(+). It carries out the reaction (8S)-8-amino-7-oxononanoate + S-adenosyl-L-methionine = S-adenosyl-4-methylsulfanyl-2-oxobutanoate + (7R,8S)-7,8-diammoniononanoate. The protein operates within cofactor biosynthesis; biotin biosynthesis; biotin from 7,8-diaminononanoate: step 1/2. It participates in cofactor biosynthesis; biotin biosynthesis; 7,8-diaminononanoate from 8-amino-7-oxononanoate (SAM route): step 1/1. In terms of biological role, bifunctional enzyme; part of the cluster involved in the biosynthesis of biotin (also known as vitamin B8 or vitamin H), a water-soluble vitamin that functions as a prosthetic group of many carboxylases, such as acetyl-CoA carboxylase and pyruvate carboxylase. Catalyzes a mechanistically unusual reaction, the ATP-dependent insertion of CO2 between the N7 and N8 nitrogen atoms of 7,8-diaminopelargonic acid (DAPA) to form an ureido ring. Also catalyzes the transfer of the alpha-amino group from S-adenosyl-L-methionine (SAM) to 7-keto-8-aminopelargonic acid (KAPA) to form 7,8-diaminopelargonic acid (DAPA). It is the only animotransferase known to utilize SAM as an amino donor. The sequence is that of Bifunctional dethiobiotin synthetase/adenosylmethionine-8-amino-7-oxononanoate aminotransferase from Emericella nidulans (strain FGSC A4 / ATCC 38163 / CBS 112.46 / NRRL 194 / M139) (Aspergillus nidulans).